A 386-amino-acid polypeptide reads, in one-letter code: Acetylornithine aminotransferase (386 aa).

Pyridoxal 5'-phosphate-binding positions include 96–97 and Phe-123; that span reads GA. N(2)-acetyl-L-ornithine is bound at residue Arg-126. 208–211 contributes to the pyridoxal 5'-phosphate binding site; the sequence is DEVQ. The residue at position 237 (Lys-237) is an N6-(pyridoxal phosphate)lysine. Ser-265 provides a ligand contact to N(2)-acetyl-L-ornithine. Thr-266 serves as a coordination point for pyridoxal 5'-phosphate.

This sequence belongs to the class-III pyridoxal-phosphate-dependent aminotransferase family. ArgD subfamily. Homodimer. Pyridoxal 5'-phosphate serves as cofactor.

It is found in the cytoplasm. It carries out the reaction N(2)-acetyl-L-ornithine + 2-oxoglutarate = N-acetyl-L-glutamate 5-semialdehyde + L-glutamate. Its pathway is amino-acid biosynthesis; L-arginine biosynthesis; N(2)-acetyl-L-ornithine from L-glutamate: step 4/4. This chain is Acetylornithine aminotransferase, found in Bacillus cereus (strain ATCC 14579 / DSM 31 / CCUG 7414 / JCM 2152 / NBRC 15305 / NCIMB 9373 / NCTC 2599 / NRRL B-3711).